The primary structure comprises 341 residues: Glyceraldehyde-3-phosphate dehydrogenase 1 (341 aa).

Residues 13–14, Asp-35, and Lys-85 contribute to the NAD(+) site; that span reads RI. Residues 157–159, Thr-188, 217–218, and Arg-240 each bind D-glyceraldehyde 3-phosphate; these read SCT and TG. The active-site Nucleophile is Cys-158. Position 322 (Asn-322) interacts with NAD(+).

It belongs to the glyceraldehyde-3-phosphate dehydrogenase family. Homotetramer.

The protein localises to the cytoplasm. The enzyme catalyses D-glyceraldehyde 3-phosphate + phosphate + NAD(+) = (2R)-3-phospho-glyceroyl phosphate + NADH + H(+). It functions in the pathway carbohydrate degradation; glycolysis; pyruvate from D-glyceraldehyde 3-phosphate: step 1/5. The protein is Glyceraldehyde-3-phosphate dehydrogenase 1 (gpd-1) of Caenorhabditis elegans.